The primary structure comprises 82 residues: Small ribosomal subunit protein bS16 (82 aa).

Belongs to the bacterial ribosomal protein bS16 family.

The polypeptide is Small ribosomal subunit protein bS16 (Synechococcus elongatus (strain ATCC 33912 / PCC 7942 / FACHB-805) (Anacystis nidulans R2)).